The chain runs to 669 residues: Probable serine/threonine-protein kinase DDB_G0291918 (669 aa).

The Protein kinase domain maps to Tyr-13–Leu-360. ATP-binding positions include Leu-19–Val-27 and Lys-42. The active-site Proton acceptor is the Asp-141. Low complexity predominate over residues Gln-396–Gln-405. 2 disordered regions span residues Gln-396–Phe-518 and Phe-530–Arg-550. Over residues Lys-406–His-418 the composition is skewed to polar residues. Composition is skewed to low complexity over residues Asn-419 to Asn-449 and Gln-457 to Asp-494.

Belongs to the protein kinase superfamily. Ser/Thr protein kinase family.

It carries out the reaction L-seryl-[protein] + ATP = O-phospho-L-seryl-[protein] + ADP + H(+). The catalysed reaction is L-threonyl-[protein] + ATP = O-phospho-L-threonyl-[protein] + ADP + H(+). This is Probable serine/threonine-protein kinase DDB_G0291918 from Dictyostelium discoideum (Social amoeba).